Consider the following 136-residue polypeptide: Large ribosomal subunit protein uL16c (136 aa).

Residues 1–17 (MLSPKRVKFRKQHRGRM) are compositionally biased toward basic residues. Positions 1-25 (MLSPKRVKFRKQHRGRMKGISTRGN) are disordered.

This sequence belongs to the universal ribosomal protein uL16 family. Part of the 50S ribosomal subunit.

The protein resides in the plastid. It localises to the chloroplast. The polypeptide is Large ribosomal subunit protein uL16c (Anthoceros angustus (Hornwort)).